Consider the following 740-residue polypeptide: Ion-translocating oxidoreductase complex subunit C (740 aa).

2 4Fe-4S ferredoxin-type domains span residues 369–397 (GEPQ…QQLY) and 407–436 (KATT…VQYF). [4Fe-4S] cluster is bound by residues cysteine 377, cysteine 380, cysteine 383, cysteine 387, cysteine 416, cysteine 419, cysteine 422, and cysteine 426. The tract at residues 602–714 (KLEQQQANAE…NAEPEEQIDP (113 aa)) is disordered. Over residues 605-615 (QQQANAEPEQQ) the composition is skewed to low complexity.

Belongs to the 4Fe4S bacterial-type ferredoxin family. RnfC subfamily. As to quaternary structure, the complex is composed of six subunits: RsxA, RsxB, RsxC, RsxD, RsxE and RsxG. The cofactor is [4Fe-4S] cluster.

Its subcellular location is the cell inner membrane. Its function is as follows. Part of a membrane-bound complex that couples electron transfer with translocation of ions across the membrane. Required to maintain the reduced state of SoxR. The polypeptide is Ion-translocating oxidoreductase complex subunit C (Escherichia coli O17:K52:H18 (strain UMN026 / ExPEC)).